An 81-amino-acid polypeptide reads, in one-letter code: Small ribosomal subunit protein bS16 (81 aa).

It belongs to the bacterial ribosomal protein bS16 family.

The chain is Small ribosomal subunit protein bS16 from Clostridium acetobutylicum (strain ATCC 824 / DSM 792 / JCM 1419 / IAM 19013 / LMG 5710 / NBRC 13948 / NRRL B-527 / VKM B-1787 / 2291 / W).